The following is a 182-amino-acid chain: Nucleoside-triphosphatase THEP1 (182 aa).

Residues Gly10 to Thr17 and Val102 to Gly109 contribute to the ATP site.

It belongs to the THEP1 NTPase family.

The catalysed reaction is a ribonucleoside 5'-triphosphate + H2O = a ribonucleoside 5'-diphosphate + phosphate + H(+). Has nucleotide phosphatase activity towards ATP, GTP, CTP, TTP and UTP. May hydrolyze nucleoside diphosphates with lower efficiency. The polypeptide is Nucleoside-triphosphatase THEP1 (Thermofilum pendens (strain DSM 2475 / Hrk 5)).